A 335-amino-acid polypeptide reads, in one-letter code: Biotin synthase (335 aa).

In terms of domain architecture, Radical SAM core spans Tyr-43–Ala-269. [4Fe-4S] cluster contacts are provided by Cys-61, Cys-65, and Cys-68. [2Fe-2S] cluster contacts are provided by Cys-104, Cys-137, Cys-197, and Arg-267.

Belongs to the radical SAM superfamily. Biotin synthase family. In terms of assembly, homodimer. Requires [4Fe-4S] cluster as cofactor. [2Fe-2S] cluster serves as cofactor.

It catalyses the reaction (4R,5S)-dethiobiotin + (sulfur carrier)-SH + 2 reduced [2Fe-2S]-[ferredoxin] + 2 S-adenosyl-L-methionine = (sulfur carrier)-H + biotin + 2 5'-deoxyadenosine + 2 L-methionine + 2 oxidized [2Fe-2S]-[ferredoxin]. Its pathway is cofactor biosynthesis; biotin biosynthesis; biotin from 7,8-diaminononanoate: step 2/2. In terms of biological role, catalyzes the conversion of dethiobiotin (DTB) to biotin by the insertion of a sulfur atom into dethiobiotin via a radical-based mechanism. The protein is Biotin synthase of Staphylococcus aureus (strain MSSA476).